The chain runs to 335 residues: 4-hydroxy-3-methylbut-2-enyl diphosphate reductase (335 aa).

Cysteine 21 serves as a coordination point for [4Fe-4S] cluster. (2E)-4-hydroxy-3-methylbut-2-enyl diphosphate contacts are provided by histidine 50 and histidine 86. Positions 50 and 86 each coordinate dimethylallyl diphosphate. Histidine 50 and histidine 86 together coordinate isopentenyl diphosphate. Cysteine 108 lines the [4Fe-4S] cluster pocket. Histidine 136 is a (2E)-4-hydroxy-3-methylbut-2-enyl diphosphate binding site. Residue histidine 136 participates in dimethylallyl diphosphate binding. An isopentenyl diphosphate-binding site is contributed by histidine 136. The active-site Proton donor is the glutamate 138. Threonine 177 lines the (2E)-4-hydroxy-3-methylbut-2-enyl diphosphate pocket. Cysteine 207 contributes to the [4Fe-4S] cluster binding site. The (2E)-4-hydroxy-3-methylbut-2-enyl diphosphate site is built by serine 235, serine 236, asparagine 237, and serine 280. The dimethylallyl diphosphate site is built by serine 235, serine 236, asparagine 237, and serine 280. Isopentenyl diphosphate is bound by residues serine 235, serine 236, asparagine 237, and serine 280.

Belongs to the IspH family. [4Fe-4S] cluster serves as cofactor.

The catalysed reaction is isopentenyl diphosphate + 2 oxidized [2Fe-2S]-[ferredoxin] + H2O = (2E)-4-hydroxy-3-methylbut-2-enyl diphosphate + 2 reduced [2Fe-2S]-[ferredoxin] + 2 H(+). The enzyme catalyses dimethylallyl diphosphate + 2 oxidized [2Fe-2S]-[ferredoxin] + H2O = (2E)-4-hydroxy-3-methylbut-2-enyl diphosphate + 2 reduced [2Fe-2S]-[ferredoxin] + 2 H(+). Its pathway is isoprenoid biosynthesis; dimethylallyl diphosphate biosynthesis; dimethylallyl diphosphate from (2E)-4-hydroxy-3-methylbutenyl diphosphate: step 1/1. It participates in isoprenoid biosynthesis; isopentenyl diphosphate biosynthesis via DXP pathway; isopentenyl diphosphate from 1-deoxy-D-xylulose 5-phosphate: step 6/6. Catalyzes the conversion of 1-hydroxy-2-methyl-2-(E)-butenyl 4-diphosphate (HMBPP) into a mixture of isopentenyl diphosphate (IPP) and dimethylallyl diphosphate (DMAPP). Acts in the terminal step of the DOXP/MEP pathway for isoprenoid precursor biosynthesis. The chain is 4-hydroxy-3-methylbut-2-enyl diphosphate reductase from Rhizobium rhizogenes (strain K84 / ATCC BAA-868) (Agrobacterium radiobacter).